The sequence spans 335 residues: Mesoderm-specific transcript protein (335 aa).

2 helical membrane passes run 13 to 33 and 63 to 83; these read WWVQ…HIPP and VGVV…TSSY. An AB hydrolase-1 domain is found at 71–310; sequence IVVLLHGFPT…PRSTVSILDD (240 aa). The RVIALD motif lies at 98-103; the sequence is RVIALD. Asn163 carries an N-linked (GlcNAc...) asparagine glycan. Residues 266–286 traverse the membrane as a helical segment; sequence VGALASVSIPIHFIYGPLDPI.

Belongs to the AB hydrolase superfamily. As to expression, expressed in mesodermal tissues. Isoform 1 is exclusively expressed from the paternal allele in all fetal tissues and cell lines examined, whereas isoform 2 is preferentially expressed from the paternal allele in a tissue-type-specific manner.

Its subcellular location is the endoplasmic reticulum membrane. This is Mesoderm-specific transcript protein (Mest) from Mus musculus (Mouse).